The sequence spans 489 residues: MKLLTLLSHLPGFWVHHGGNPDIVALEMDSRRVASGSLFFCLKGFTVDGHDFAEEAVARGAAAIVAERPLSVDVPVVLVSDSRRAMAILADAFYGRPTHRLHLIGVTGTNGKTTTTSIIEQIARKTGKKTGLIGTVHIKVGDRSYPAANTTPESLILQRTFKQMVDEGVEFVAMEVSSHALHQGRVHGCDYDVAVFTNLTQDHLDYHGTMEEYRNAKGLLFAQLGNRYDERRPKFAVLNHDDPVSQYYKHMTAAPIVTYGMREKSDVMAEQIRMTAGGMAFRLCTPHGSAAVETKLVGSFNVYNILAAAAACLASGFSLETIAAALADVEPVPGRFETVDEGQNFTIIVDYAHTPDSLENALKTVRQLAKRNVYVVIGCGGDRDPSKRPLMAQVAVRYADVAIFTSDNPRSEDPKQILRDMEAGVSAEIGKHVTIPDREEAIRYAIGQAQEGDVVLIAGKGHETYQIIGNDVIEFDDRAVARAAVKERG.

S30 lines the UDP-N-acetyl-alpha-D-muramoyl-L-alanyl-D-glutamate pocket. 108–114 is a binding site for ATP; that stretch reads GTNGKTT. Residues N149, 150–151, S177, Q183, and R185 each bind UDP-N-acetyl-alpha-D-muramoyl-L-alanyl-D-glutamate; that span reads TT. The residue at position 217 (K217) is an N6-carboxylysine. Meso-2,6-diaminopimelate is bound by residues R383, 407–410, G459, and E463; that span reads DNPR. Residues 407–410 carry the Meso-diaminopimelate recognition motif motif; the sequence is DNPR.

Belongs to the MurCDEF family. MurE subfamily. Mg(2+) is required as a cofactor. Post-translationally, carboxylation is probably crucial for Mg(2+) binding and, consequently, for the gamma-phosphate positioning of ATP.

The protein localises to the cytoplasm. The enzyme catalyses UDP-N-acetyl-alpha-D-muramoyl-L-alanyl-D-glutamate + meso-2,6-diaminopimelate + ATP = UDP-N-acetyl-alpha-D-muramoyl-L-alanyl-gamma-D-glutamyl-meso-2,6-diaminopimelate + ADP + phosphate + H(+). Its pathway is cell wall biogenesis; peptidoglycan biosynthesis. Catalyzes the addition of meso-diaminopimelic acid to the nucleotide precursor UDP-N-acetylmuramoyl-L-alanyl-D-glutamate (UMAG) in the biosynthesis of bacterial cell-wall peptidoglycan. The chain is UDP-N-acetylmuramoyl-L-alanyl-D-glutamate--2,6-diaminopimelate ligase from Geobacillus kaustophilus (strain HTA426).